Consider the following 446-residue polypeptide: Adenylosuccinate synthetase (446 aa).

Residues 12–18 (GDEGKGK) and 40–42 (GHT) each bind GTP. Residue Asp-13 is the Proton acceptor of the active site. Mg(2+)-binding residues include Asp-13 and Gly-40. Residues 13-16 (DEGK), 38-41 (NAGH), Thr-128, Arg-142, Gln-223, Thr-238, and Arg-302 each bind IMP. His-41 functions as the Proton donor in the catalytic mechanism. 298-304 (TTTGRRR) lines the substrate pocket. GTP contacts are provided by residues Arg-304, 330-332 (KLD), and 412-414 (SLG).

The protein belongs to the adenylosuccinate synthetase family. Homodimer. Requires Mg(2+) as cofactor.

The protein localises to the cytoplasm. It carries out the reaction IMP + L-aspartate + GTP = N(6)-(1,2-dicarboxyethyl)-AMP + GDP + phosphate + 2 H(+). The protein operates within purine metabolism; AMP biosynthesis via de novo pathway; AMP from IMP: step 1/2. Plays an important role in the de novo pathway of purine nucleotide biosynthesis. Catalyzes the first committed step in the biosynthesis of AMP from IMP. This is Adenylosuccinate synthetase from Acaryochloris marina (strain MBIC 11017).